We begin with the raw amino-acid sequence, 111 residues long: Cornifelin homolog (111 aa).

It belongs to the cornifelin family.

The sequence is that of Cornifelin homolog (cnfn) from Xenopus tropicalis (Western clawed frog).